We begin with the raw amino-acid sequence, 306 residues long: MILKNKRMLKIGICVGILGLSITSLEAFTGESLQVEAKEKTGQVKHKNQATHKEFSQLEKKFDARLGVYAIDTGTNQTISYRPNERFAFASTYKALAAGVLLQQNSIDSLNEVITYTKEDLVDYSPVTEKHVDTGMKLGEIAEAAVRSSDNTAGNILFNKIGGPKGYEKALRHMGDRITMSNRFETELNEAIPGDIRDTSTAKAIATNLKAFTVGNALPAEKRKILTEWMKGNATGDKLIRAGIPTDWVVGDKSGAGSYGTRNDIAVVWPPNSAPIIVLISSKDEKEAIYNDQLIAEATKVIVKGS.

The first 27 residues, 1-27 (MILKNKRMLKIGICVGILGLSITSLEA), serve as a signal peptide directing secretion. Ser-91 acts as the Acyl-ester intermediate in catalysis. Glu-187 (proton acceptor) is an active-site residue. 253–255 (KSG) lines the substrate pocket.

It belongs to the class-A beta-lactamase family.

It catalyses the reaction a beta-lactam + H2O = a substituted beta-amino acid. Its function is as follows. This protein is a beta-lactamase with a substrate specificity for penicillins. This Bacillus cereus protein is Beta-lactamase 1 (blaY).